The chain runs to 793 residues: Splicing factor 3A subunit 1 (793 aa).

The segment at 1–43 (MPAGPVQAVPPPPPVPTEPKQPTEEEASSKEDSAPSKPVVGII) is disordered. The span at 8 to 19 (AVPPPPPVPTEP) shows a compositional bias: pro residues. A Glycyl lysine isopeptide (Lys-Gly) (interchain with G-Cter in SUMO2) cross-link involves residue lysine 20. The span at 21 to 34 (QPTEEEASSKEDSA) shows a compositional bias: basic and acidic residues. Residues 52–94 (IVDKTASFVARNGPEFEARIRQNEINNPKFNFLNPNDPYHAYY) form an SURP motif 1 repeat. An N6-acetyllysine modification is found at lysine 55. Lysine 131 participates in a covalent cross-link: Glycyl lysine isopeptide (Lys-Gly) (interchain with G-Cter in SUMO2). One copy of the SURP motif 2 repeat lies at 166–208 (VVKLTAQFVARNGRQFLTQLMQKEQRNYQFDFLRPQHSLFNYF). A disordered region spans residues 318–428 (GESEEVEMEV…KIPASKMQEH (111 aa)). Residues serine 320, serine 329, and serine 359 each carry the phosphoserine modification. Acidic residues-rich tracts occupy residues 320–334 (SEEVEMEVESDEEDD) and 354–364 (DMDEGSDDEEE). Pro residues predominate over residues 368–384 (VPPPPETPMPPPLPPTP). A compositionally biased stretch (basic and acidic residues) spans 388 to 397 (IVRKDYDPKA). Serine 413 is subject to Phosphoserine. Lysine 424 participates in a covalent cross-link: Glycyl lysine isopeptide (Lys-Gly) (interchain with G-Cter in SUMO2). Serine 451 is modified (phosphoserine). Position 456 is a phosphotyrosine (tyrosine 456). The span at 488–502 (IGEEEIQKPEEKVTW) shows a compositional bias: basic and acidic residues. Disordered regions lie at residues 488 to 518 (IGEEEIQKPEEKVTWDGHSGSMARTQQAAQA), 530 to 584 (HKAK…TMPP), and 665 to 688 (APMPPVHPPPPMEDEPTSKKLKTE). Lysine 499 participates in a covalent cross-link: Glycyl lysine isopeptide (Lys-Gly) (interchain with G-Cter in SUMO2). Serine 508 bears the Phosphoserine mark. Residues 509–518 (MARTQQAAQA) show a composition bias toward polar residues. Residue lysine 542 forms a Glycyl lysine isopeptide (Lys-Gly) (interchain with G-Cter in SUMO2) linkage. Pro residues predominate over residues 665–675 (APMPPVHPPPP). The required and sufficient for nuclear import stretch occupies residues 680–702 (PTSKKLKTEDSLMPEEEFLRRNK). Lysine 686 is covalently cross-linked (Glycyl lysine isopeptide (Lys-Gly) (interchain with G-Cter in SUMO2)). The 87-residue stretch at 707–793 (IKVQVPNMQD…ALKERGGRKK (87 aa)) folds into the Ubiquitin-like domain. Phosphotyrosine is present on tyrosine 759.

In terms of assembly, component of the 17S U2 SnRNP complex, a ribonucleoprotein complex that contains small nuclear RNA (snRNA) U2 and a number of specific proteins. Part of the SF3A subcomplex of the 17S U2 SnRNP complex which is composed of three subunits; SF3A3/SAP61, SF3A2/SAP62 and SF3A1/SAP114. SF3A associates with the splicing factor SF3B and a 12S RNA unit to form the mature 17S U2 small nuclear ribonucleoprotein complex (17S U2 snRNP). SF3A1 functions as a scaffold that interacts directly with both SF3A2 and SF3A3. Identified in the spliceosome 'E' complex, a precursor of the spliceosome 'A' complex. Identified in the spliceosome 'A' and 'B' complexes. Identified in the spliceosome 'C' complex. Interacts with P2RX6; resulting in a reduction of the splicing activity. Ubiquitously expressed.

It localises to the nucleus. The protein localises to the nucleus speckle. In terms of biological role, component of the 17S U2 SnRNP complex of the spliceosome, a large ribonucleoprotein complex that removes introns from transcribed pre-mRNAs. The 17S U2 SnRNP complex (1) directly participates in early spliceosome assembly and (2) mediates recognition of the intron branch site during pre-mRNA splicing by promoting the selection of the pre-mRNA branch-site adenosine, the nucleophile for the first step of splicing. Within the 17S U2 SnRNP complex, SF3A1 is part of the SF3A subcomplex that contributes to the assembly of the 17S U2 snRNP, and the subsequent assembly of the pre-spliceosome 'E' complex and the pre-catalytic spliceosome 'A' complex. Involved in pre-mRNA splicing as a component of pre-catalytic spliceosome 'B' complexes. The chain is Splicing factor 3A subunit 1 (SF3A1) from Homo sapiens (Human).